An 869-amino-acid chain; its full sequence is Valine--tRNA ligase (869 aa).

Residues Pro51–His61 carry the 'HIGH' region motif. Positions Lys523–Ser527 match the 'KMSKS' region motif. Lys526 is an ATP binding site. Residues Glu797–Lys869 adopt a coiled-coil conformation.

The protein belongs to the class-I aminoacyl-tRNA synthetase family. ValS type 1 subfamily. In terms of assembly, monomer.

Its subcellular location is the cytoplasm. The catalysed reaction is tRNA(Val) + L-valine + ATP = L-valyl-tRNA(Val) + AMP + diphosphate. Functionally, catalyzes the attachment of valine to tRNA(Val). As ValRS can inadvertently accommodate and process structurally similar amino acids such as threonine, to avoid such errors, it has a 'posttransfer' editing activity that hydrolyzes mischarged Thr-tRNA(Val) in a tRNA-dependent manner. This Malacoplasma penetrans (strain HF-2) (Mycoplasma penetrans) protein is Valine--tRNA ligase.